The chain runs to 500 residues: Probable transcription factor FPSE_09189 (500 aa).

Disordered regions lie at residues 161 to 197 (MVRHLSNHPPSGTVPVGPCSRPEPSRASQRPEPPSLA) and 457 to 500 (IRTG…TQLE). The segment covering 459–474 (TGHEDSSRDGGRENKA) has biased composition (basic and acidic residues). The segment covering 475 to 484 (MNRNRSTGNS) has biased composition (polar residues).

The protein resides in the nucleus. Its function is as follows. The two putative transcription factors FPSE_09188 and FPSE_09189 could be responsible for orchestrating expression of the W493 A and B biosynthesis cluster genes. W493 A and B consist of six amino acid residues D-allo-thr, L-Ala, D-Ala, L-Gln, D-Tyr, and L-Val/L-Ile linked to a 3-hydroxy-4-methyltetradecanoic acid polyketide chain. This chain is Probable transcription factor FPSE_09189, found in Fusarium pseudograminearum (strain CS3096) (Wheat and barley crown-rot fungus).